Reading from the N-terminus, the 178-residue chain is Translation initiation factor IF-3 (178 aa).

Residues 1–20 (MRRPFRATPVQKDGPRSNRD) form a disordered region.

This sequence belongs to the IF-3 family. In terms of assembly, monomer.

Its subcellular location is the cytoplasm. Functionally, IF-3 binds to the 30S ribosomal subunit and shifts the equilibrium between 70S ribosomes and their 50S and 30S subunits in favor of the free subunits, thus enhancing the availability of 30S subunits on which protein synthesis initiation begins. This chain is Translation initiation factor IF-3, found in Brucella abortus biovar 1 (strain 9-941).